Consider the following 1037-residue polypeptide: Guanine nucleotide-binding protein G(s) subunit alpha isoforms XLas (1037 aa).

4 disordered regions span residues Met-1–Glu-105, Ala-185–Met-224, Ser-283–Cys-588, and Pro-640–Ser-666. Residues Ala-33–Ala-46 show a composition bias toward low complexity. Residues Pro-343–Val-354 are compositionally biased toward basic and acidic residues. Low complexity-rich tracts occupy residues Met-361–Pro-408 and Ala-416–Gly-521. Over residues Gly-553–Tyr-565 the composition is skewed to basic and acidic residues. Acidic residues predominate over residues Ser-572–Asp-583. Residues Pro-640–Arg-660 are compositionally biased toward basic and acidic residues. The stretch at Leu-641–Lys-667 forms a coiled coil. The region spanning Cys-682 to Leu-1037 is the G-alpha domain. The segment at Arg-685–Thr-698 is G1 motif. Position 690–698 (Gly-690–Thr-698) interacts with GTP. Ser-697 contacts Mg(2+). A disordered region spans residues Phe-711 to Lys-734. A coiled-coil region spans residues Glu-730–Leu-756. The interval Asp-839–Thr-847 is G2 motif. Residues Leu-840–Thr-847, Asp-866–Gln-870, and Asn-935–Asp-938 each bind GTP. Arg-844 is subject to ADP-ribosylarginine; by cholera toxin. A Mg(2+)-binding site is contributed by Thr-847. Positions Phe-862 to Arg-871 are G3 motif. The segment at Ile-931–Asp-938 is G4 motif. The residue at position 995 (Ser-995) is a Phosphoserine. Residues Thr-1007–Thr-1012 form a G5 motif region. Residue Ala-1009 coordinates GTP.

The protein belongs to the G-alpha family. G(s) subfamily. As to quaternary structure, g proteins are composed of 3 units; alpha, beta and gamma. The alpha chain contains the guanine nucleotide binding site. Interacts through its N-terminal region with ALEX which is produced from the same locus in a different open reading frame. This interaction may inhibit its adenylyl cyclase-stimulating activity. Interacts with MAGED2.

The protein resides in the cell membrane. It localises to the apical cell membrane. The catalysed reaction is GTP + H2O = GDP + phosphate + H(+). Guanine nucleotide-binding proteins (G proteins) function as transducers in numerous signaling pathways controlled by G protein-coupled receptors (GPCRs). The alpha chain contains the guanine nucleotide binding site and alternates between an active, GTP-bound state and an inactive, GDP-bound state. Signaling by an activated GPCR promotes GDP release and GTP binding. The alpha subunit has a low GTPase activity that converts bound GTP to GDP, thereby terminating the signal. Both GDP release and GTP hydrolysis are modulated by numerous regulatory proteins. Signaling involves the activation of adenylyl cyclases, resulting in increased levels of the signaling molecule cAMP. GNAS functions downstream of several GPCRs, including beta-adrenergic receptors. XLas isoforms interact with the same set of receptors as Gnas isoforms. The sequence is that of Guanine nucleotide-binding protein G(s) subunit alpha isoforms XLas (GNAS) from Homo sapiens (Human).